The primary structure comprises 1191 residues: MNELTGQLVQYGQHRQRRSFARIKEVLELPNLIEIQTASYEWFLEEGLREMFRDISPIEDFTGNLSLEFIDYSLGDPKYDVDECKERDVTYAAPLRVKVRLYNKETDEVKEQDVFMGDFPLMTETGTFIINGAERVIVSQLVRSPSVYFHDKTDKNGKKGFGATVIPNRGAWLEYETDAKDVVYVRIDRTRKLPVTVLLRALGFGSDQEIIDIIGDNEYLRNTLEKDNSESTEKALLEIYERLRPGEPPTVESAKSLLYSRFFDAKRYDLANVGRYKMNKKLHIKNRLFNQTIAETLVDPETGEILVEKGTVLDRRTLDKILPYLEDSSKGIGFRTLSQVGGVLEDDVTIQSIKIYAPKDEAQKEINIISNAYIDEEVKNITPADVLSSVSYFFNLLYQVGATDDIDHLGNRRLRSVGELLQNQFRIGLSRMERVVRERMSINDTAAIVPQQLINIRPVIASIKEFFGSSQLSQFMDQTNPLAELTHKRRLSALGPGGLTRERAGFEVRDVHYSHYGRMCPIETPEGPNIGLINSLSSFAKVNKFGFIETPYRRIDHETGQVTDQIDYLTADEEDNYYVAQANSPLNPDGSFANDEVVGRFRGDNTVFNKAQMDYMDVSPKQVVSAATACIPFLENDDSNRALMGANMQRQAVPLLNPEAPFVGTGMEHVDARDSGAAVVAKYDGIVEHVEARSIHVRRIEVVDGKEVKGDLTKYKLQKFIRSNQGTSYNQRPLVKVGERVKPRDILADGPSMEKGELALGRNVLVAFMTWNGFNYEDAVIMSERLVKDDVYTSVHIEEYESESRDTKLGPEEITRDIPNVGEDALRNLDERGIIRIGAEVRDGDILVGKVTPKGVTELTAEERLLHAIFGEKAREVRDTSLRVPHGAGGIILDVKVFNREDGDELPPGVNQLVRAYIVQKRKIRVGDKMAGRHGNKGVISRILPEEDMPFMPDGTPVDIMLNPLGVPSRMNIGQVLELHLGMASRYLGVHMATPVFDGANEEDVWETMEEAGMNRDGKTILYDGRSGEPFDNRVSVGIMYMIKLAHMVDDKLHARSTGPYSLVTQQPLGGKAQFGGQRFGEMEVWALEAYGAAYTLQEILTVKSDDVVGRVKTYEAIVKGESVPEPGVPESFKVLIKELQSLGMDVKMLTVNDEEVELRDLDEEEDLQPADALNIAPQPDTEEEPVESFE.

Positions 1164–1191 (EEEDLQPADALNIAPQPDTEEEPVESFE) are disordered. The span at 1181–1191 (DTEEEPVESFE) shows a compositional bias: acidic residues.

This sequence belongs to the RNA polymerase beta chain family. As to quaternary structure, the RNAP catalytic core consists of 2 alpha, 1 beta, 1 beta' and 1 omega subunit. When a sigma factor is associated with the core the holoenzyme is formed, which can initiate transcription.

The enzyme catalyses RNA(n) + a ribonucleoside 5'-triphosphate = RNA(n+1) + diphosphate. Functionally, DNA-dependent RNA polymerase catalyzes the transcription of DNA into RNA using the four ribonucleoside triphosphates as substrates. This Lysinibacillus sphaericus (strain C3-41) protein is DNA-directed RNA polymerase subunit beta.